Here is a 634-residue protein sequence, read N- to C-terminus: DNA-directed RNA polymerase subunit gamma (634 aa).

Positions 74, 76, 89, and 92 each coordinate Zn(2+). Aspartate 471, aspartate 473, and aspartate 475 together coordinate Mg(2+).

Belongs to the RNA polymerase beta' chain family. RpoC1 subfamily. In terms of assembly, in cyanobacteria the RNAP catalytic core is composed of 2 alpha, 1 beta, 1 beta', 1 gamma and 1 omega subunit. When a sigma factor is associated with the core the holoenzyme is formed, which can initiate transcription. The cofactor is Mg(2+). Requires Zn(2+) as cofactor.

It carries out the reaction RNA(n) + a ribonucleoside 5'-triphosphate = RNA(n+1) + diphosphate. Functionally, DNA-dependent RNA polymerase catalyzes the transcription of DNA into RNA using the four ribonucleoside triphosphates as substrates. This chain is DNA-directed RNA polymerase subunit gamma, found in Synechococcus sp. (strain CC9605).